Consider the following 714-residue polypeptide: NCK-interacting protein with SH3 domain (714 aa).

The 58-residue stretch at 1 to 58 (MYRALYAFRSAEPNAMAFAAGETFLVLERSSTHWWLAARARSGETGYVPPAYLHRLQG) folds into the SH3 domain. 2 disordered regions span residues 103-126 (TLSR…DHHL) and 139-298 (RTGF…AAET). Positions 106–121 (RRGTSASSATVMTPST) are enriched in polar residues. The residue at position 120 (Ser120) is a Phosphoserine. The Nuclear localization signal signature appears at 168-185 (RRAAPTTPPPPVKRRDRE). Position 174 is a phosphothreonine (Thr174). The segment covering 200–215 (SGGSSVSSGSSASSTS) has biased composition (low complexity). The span at 216–226 (MDTLYTGSSPS) shows a compositional bias: polar residues. The segment covering 252 to 263 (QPSPSKAPSPEP) has biased composition (pro residues). Phosphoserine occurs at positions 260, 286, and 673.

In terms of assembly, associates with the intermediate filaments, vimentin and desmin. Binds the first and third SH3 domains of NCK. Binds the proline-rich domains of N-WASP through its SH3 domain. Similarly, binds diaphanous protein homolog 1 (DRF1). Binds the SH3 domains of GRB2 through its proline-rich domains. Interacts with FASLG.

The protein resides in the nucleus. Functionally, has an important role in stress fiber formation induced by active diaphanous protein homolog 1 (DRF1). Induces microspike formation, in vivo. In vitro, stimulates N-WASP-induced ARP2/3 complex activation in the absence of CDC42. May play an important role in the maintenance of sarcomere and/or in the assembly of myofibrils into sarcomeres. Implicated in regulation of actin polymerization and cell adhesion. In Mus musculus (Mouse), this protein is NCK-interacting protein with SH3 domain (Nckipsd).